The following is a 74-amino-acid chain: ATP synthase subunit c (74 aa).

2 helical membrane-spanning segments follow: residues 9–29 and 54–74; these read IGAG…GNIF and FALT…ILFV.

This sequence belongs to the ATPase C chain family. As to quaternary structure, F-type ATPases have 2 components, F(1) - the catalytic core - and F(0) - the membrane proton channel. F(1) has five subunits: alpha(3), beta(3), gamma(1), delta(1), epsilon(1). F(0) has three main subunits: a(1), b(2) and c(10-14). The alpha and beta chains form an alternating ring which encloses part of the gamma chain. F(1) is attached to F(0) by a central stalk formed by the gamma and epsilon chains, while a peripheral stalk is formed by the delta and b chains.

The protein localises to the cell inner membrane. Its function is as follows. F(1)F(0) ATP synthase produces ATP from ADP in the presence of a proton or sodium gradient. F-type ATPases consist of two structural domains, F(1) containing the extramembraneous catalytic core and F(0) containing the membrane proton channel, linked together by a central stalk and a peripheral stalk. During catalysis, ATP synthesis in the catalytic domain of F(1) is coupled via a rotary mechanism of the central stalk subunits to proton translocation. Key component of the F(0) channel; it plays a direct role in translocation across the membrane. A homomeric c-ring of between 10-14 subunits forms the central stalk rotor element with the F(1) delta and epsilon subunits. In Gluconacetobacter diazotrophicus (strain ATCC 49037 / DSM 5601 / CCUG 37298 / CIP 103539 / LMG 7603 / PAl5), this protein is ATP synthase subunit c.